The primary structure comprises 214 residues: Methyltransferase HEMK2 (214 aa).

Positions 29, 51, 53, 77, 103, 104, and 122 each coordinate S-adenosyl-L-methionine. Asn122 contacts a protein.

It belongs to the eukaryotic/archaeal PrmC-related family. In terms of assembly, heterodimer; heterodimerization with TRMT112 is required for S-adenosyl-L-methionine-binding. Post-translationally, ubiquitinated, leading to its degradation by the proteasome. In terms of tissue distribution, highly expressed in undifferentiated embryonic stem cells (at protein level). Also expressed in testis and brain, weakly expressed in differentiated embryonic stem cells and kidney. Not expressed in muscle, heart, placenta, pancreas, lung and stomach.

It is found in the nucleus. The enzyme catalyses L-lysyl-[histone] + S-adenosyl-L-methionine = N(6)-methyl-L-lysyl-[histone] + S-adenosyl-L-homocysteine + H(+). It catalyses the reaction L-glutaminyl-[protein] + S-adenosyl-L-methionine = N(5)-methyl-L-glutaminyl-[protein] + S-adenosyl-L-homocysteine + H(+). The catalysed reaction is methylarsonous acid + S-adenosyl-L-methionine = dimethylarsinate + S-adenosyl-L-homocysteine + 2 H(+). Methyltransferase that can methylate proteins and, to a lower extent, arsenic. Catalytic subunit of a heterodimer with TRMT112, which monomethylates 'Lys-12' of histone H4 (H4K12me1), a modification present at the promoters of numerous genes encoding cell cycle regulators. Catalytic subunit of a heterodimer with TRMT112, which catalyzes N5-methylation of Glu residue of proteins with a Gly-Gln-Xaa-Xaa-Xaa-Arg motif. Methylates ETF1 on 'Gln-185'; ETF1 needs to be complexed to ERF3 in its GTP-bound form to be efficiently methylated. May also play a role in the modulation of arsenic-induced toxicity by mediating the conversion of monomethylarsonous acid (3+) into the less toxic dimethylarsonic acid. It however only plays a limited role in arsenic metabolism compared with AS3MT. This Mus musculus (Mouse) protein is Methyltransferase HEMK2.